A 1412-amino-acid polypeptide reads, in one-letter code: Sister chromatid cohesion protein PDS5 homolog B (1412 aa).

Residues 383 to 419 (LLVNDHLLNFVRERTLDKRWRVRKEAMMGLAQIYKKY) form an HEAT repeat. The segment at 1137–1412 (PLSSAGKQSQ…RRRTSKRERR (276 aa)) is disordered. 2 stretches are compositionally biased toward low complexity: residues 1139–1149 (SSAGKQSQSKS) and 1156–1167 (SNASSSSNPSSP). Basic and acidic residues-rich tracts occupy residues 1172–1184 (GRLD…HSEN), 1196–1212 (KKTD…LEKP), 1223–1241 (SEEK…DQKL), and 1263–1272 (QEEKRLKEDV). Residues 1322-1331 (VEEEEEEEER) are compositionally biased toward acidic residues. The segment covering 1350–1362 (RTQQSRAGRSKQA) has biased composition (polar residues). Over residues 1386–1397 (VPQEEVMEEEEV) the composition is skewed to acidic residues. The span at 1402–1412 (VRRRTSKRERR) shows a compositional bias: basic residues.

As to quaternary structure, interacts with the cohesin complex.

Its subcellular location is the nucleus. Plays a role in androgen-induced proliferative arrest. Required for maintenance of sister chromatid cohesion during mitosis. The sequence is that of Sister chromatid cohesion protein PDS5 homolog B (PDS5B) from Gallus gallus (Chicken).